Here is a 247-residue protein sequence, read N- to C-terminus: tRNA pseudouridine synthase A (247 aa).

Catalysis depends on Asp-53, which acts as the Nucleophile. Substrate is bound at residue Tyr-111.

It belongs to the tRNA pseudouridine synthase TruA family. Homodimer.

The catalysed reaction is uridine(38/39/40) in tRNA = pseudouridine(38/39/40) in tRNA. Functionally, formation of pseudouridine at positions 38, 39 and 40 in the anticodon stem and loop of transfer RNAs. The sequence is that of tRNA pseudouridine synthase A from Lacticaseibacillus casei (strain BL23) (Lactobacillus casei).